Consider the following 284-residue polypeptide: Probable plastid-lipid-associated protein 10, chloroplastic (284 aa).

The transit peptide at 1-40 (MDRIASATFSCPAISLSRVCRISPFGLNIKTNHRKRFSCR) directs the protein to the chloroplast.

Belongs to the PAP/fibrillin family.

Its subcellular location is the plastid. The protein localises to the chloroplast. The protein resides in the plastoglobule. This Arabidopsis thaliana (Mouse-ear cress) protein is Probable plastid-lipid-associated protein 10, chloroplastic (PAP10).